The sequence spans 760 residues: Xaa-Pro dipeptidyl-peptidase (760 aa).

Residues serine 349, aspartate 469, and histidine 499 each act as charge relay system in the active site.

This sequence belongs to the peptidase S15 family. Homodimer.

It is found in the cytoplasm. The enzyme catalyses Hydrolyzes Xaa-Pro-|- bonds to release unblocked, N-terminal dipeptides from substrates including Ala-Pro-|-p-nitroanilide and (sequentially) Tyr-Pro-|-Phe-Pro-|-Gly-Pro-|-Ile.. Its function is as follows. Removes N-terminal dipeptides sequentially from polypeptides having unsubstituted N-termini provided that the penultimate residue is proline. The protein is Xaa-Pro dipeptidyl-peptidase of Streptococcus pyogenes serotype M6 (strain ATCC BAA-946 / MGAS10394).